The primary structure comprises 263 residues: MNIYQTYEPSQIRELIRKKEITGPTAGLAEGYAQANLMIVKKELAFDFLLFCQRNPAACPLLDVLEPGDPVPRKSAPKADIRTDFPKYRIYRKGILQEEVSDISAYWEDDMVAFLIGCSFTFEHALMLNDIPVRHIENGHNVPMYQTNIACKRAGVFHGPMVVSMRPIPAHQITRSVQVTSRFPSVHGGPIHIGDPAMIGIANVDQPDFGETSVIKEGEVPVFWACGVTPQAVVMHTKPEIAITHAPGHMFITDQRDQQLGVL.

It belongs to the D-glutamate cyclase family.

In Bacillus pumilus (strain SAFR-032), this protein is Putative hydro-lyase BPUM_0381.